A 112-amino-acid chain; its full sequence is Secretoglobin family 2B member 20 (112 aa).

The N-terminal stretch at 1–23 (MKGTLLLLGLLVTGELSFQTTEA) is a signal peptide. N-linked (GlcNAc...) asparagine glycosylation occurs at Asn50.

This sequence belongs to the secretoglobin family. Expressed in lacrimal gland, at higher level in males than females. Expressed in the submandibular gland.

Its subcellular location is the secreted. The protein is Secretoglobin family 2B member 20 (Scgb2b20) of Mus musculus (Mouse).